The following is a 200-amino-acid chain: Probable molybdenum cofactor guanylyltransferase (200 aa).

GTP is bound by residues 9 to 11 (LAG), Lys21, Asp69, and Asp100. Asp100 contacts Mg(2+).

Belongs to the MobA family. Requires Mg(2+) as cofactor.

The protein localises to the cytoplasm. The enzyme catalyses Mo-molybdopterin + GTP + H(+) = Mo-molybdopterin guanine dinucleotide + diphosphate. In terms of biological role, transfers a GMP moiety from GTP to Mo-molybdopterin (Mo-MPT) cofactor (Moco or molybdenum cofactor) to form Mo-molybdopterin guanine dinucleotide (Mo-MGD) cofactor. The polypeptide is Probable molybdenum cofactor guanylyltransferase (Bacillus cereus (strain ATCC 10987 / NRS 248)).